A 435-amino-acid chain; its full sequence is Gamma-glutamyl phosphate reductase (435 aa).

This sequence belongs to the gamma-glutamyl phosphate reductase family.

Its subcellular location is the cytoplasm. The enzyme catalyses L-glutamate 5-semialdehyde + phosphate + NADP(+) = L-glutamyl 5-phosphate + NADPH + H(+). Its pathway is amino-acid biosynthesis; L-proline biosynthesis; L-glutamate 5-semialdehyde from L-glutamate: step 2/2. Functionally, catalyzes the NADPH-dependent reduction of L-glutamate 5-phosphate into L-glutamate 5-semialdehyde and phosphate. The product spontaneously undergoes cyclization to form 1-pyrroline-5-carboxylate. This is Gamma-glutamyl phosphate reductase from Bradyrhizobium diazoefficiens (strain JCM 10833 / BCRC 13528 / IAM 13628 / NBRC 14792 / USDA 110).